Here is a 963-residue protein sequence, read N- to C-terminus: Ubiquitin carboxyl-terminal hydrolase 4 (963 aa).

The DUSP domain occupies 11 to 122 (PDAETQKSEL…GQQPIVRKVV (112 aa)). The necessary for interaction with SART3 stretch occupies residues 27 to 216 (TLQRGAQWYL…LYQGQVLVIE (190 aa)). Residues 133–141 (VEVYLLELK) carry the Nuclear export signal motif. Residues 142–226 (LCENSDPTNV…PQNEDGTWPR (85 aa)) enclose the Ubiquitin-like 1 domain. The tract at residues 219–277 (NEDGTWPRQTQQSKSSTAPSRNFTTSPKSSASPYSSVSASPIANGDSTNTSGMHSSGVS) is disordered. A compositionally biased stretch (polar residues) spans 225–243 (PRQTQQSKSSTAPSRNFTT). The required for USP4 activation by providing conformational flexibility between the DUSP and catalytic domains stretch occupies residues 229–295 (QQSKSSTAPS…SYNCQESPLT (67 aa)). The segment covering 244–261 (SPKSSASPYSSVSASPIA) has biased composition (low complexity). The 622-residue stretch at 302–923 (CGLGNLGNTC…AAYVLFYQRR (622 aa)) folds into the USP domain. The Nucleophile role is filled by Cys-311. Positions 384-386 (PQF) are regulates ubiquitin dissociation. The interval 405 to 407 (LHE) is necessary for interaction with RBL2. Ser-445 carries the post-translational modification Phosphoserine. Positions 459–463 (LVCPE) are necessary for interaction with RB1 and RBL2. Positions 461 and 464 each coordinate Zn(2+). Residues 483 to 571 (LKKDRVMEIF…IFVYEVCSTS (89 aa)) form the Ubiquitin-like 2 domain. The interval 485–775 (KDRVMEIFLV…LQPQKKKKTA (291 aa)) is interacts with DUSP and ubiquitin-like 1 domains and is required for USP4 activation. Residues 634-701 (PLPDESGSSP…ATQKKNKGRP (68 aa)) are disordered. 2 positions are modified to phosphoserine: Ser-675 and Ser-680. The Nuclear localization signal motif lies at 767–772 (QPQKKK). Cys-799 and Cys-802 together coordinate Zn(2+). The active-site Proton acceptor is His-881. Residues 930 to 963 (TPSLSFPGSSDGGARPSSSQQGTGDDETYSMDTN) are disordered. Residues 953 to 963 (GDDETYSMDTN) show a composition bias toward acidic residues.

Belongs to the peptidase C19 family. USP4 subfamily. As to quaternary structure, interacts with RB1 (both dephosphorylated and hypophosphorylated forms). Interacts with RBL1 and RBL2. Interacts with ADORA2A (via cytoplasmic C-terminus); the interaction is direct. Interacts with SART3; recruits USP4 to its substrate PRPF3. Phosphorylated at Ser-445 by PKB/AKT1 in response to EGF stimulus, promoting its ability deubiquitinate RHEB. In terms of processing, monoubiquitinated by TRIM21. Ubiquitination does not lead to its proteasomal degradation. Autodeubiquitinated.

Its subcellular location is the cytoplasm. The protein localises to the nucleus. It carries out the reaction Thiol-dependent hydrolysis of ester, thioester, amide, peptide and isopeptide bonds formed by the C-terminal Gly of ubiquitin (a 76-residue protein attached to proteins as an intracellular targeting signal).. The completion of the deubiquitinase reaction is mediated by the DUSP and ubiquitin-like 1 domains which promotes the release of ubiquitin from the catalytic site enabling subsequent reactions to occur. In terms of biological role, deubiquitinating enzyme that removes conjugated ubiquitin from target proteins. Deubiquitinates PDPK1. Deubiquitinates TRIM21. Deubiquitinates receptor ADORA2A which increases the amount of functional receptor at the cell surface. Deubiquitinates HAS2. Deubiquitinates RHEB in response to EGF signaling, promoting mTORC1 signaling. May regulate mRNA splicing through deubiquitination of the U4 spliceosomal protein PRPF3. This may prevent its recognition by the U5 component PRPF8 thereby destabilizing interactions within the U4/U6.U5 snRNP. May also play a role in the regulation of quality control in the ER. This is Ubiquitin carboxyl-terminal hydrolase 4 (USP4) from Bos taurus (Bovine).